The sequence spans 375 residues: Probable 1-acyl-sn-glycerol-3-phosphate acyltransferase 5 (375 aa).

2 helical membrane-spanning segments follow: residues isoleucine 21–leucine 41 and cysteine 57–asparagine 77. The short motif at histidine 100–aspartate 105 is the HXXXXD motif element. The next 2 helical transmembrane spans lie at tyrosine 312–phenylalanine 332 and tryptophan 337–leucine 357.

The protein belongs to the 1-acyl-sn-glycerol-3-phosphate acyltransferase family. Widely expressed at low level.

It localises to the membrane. The catalysed reaction is a 1-acyl-sn-glycero-3-phosphate + an acyl-CoA = a 1,2-diacyl-sn-glycero-3-phosphate + CoA. It functions in the pathway phospholipid metabolism; CDP-diacylglycerol biosynthesis; CDP-diacylglycerol from sn-glycerol 3-phosphate: step 2/3. May convert lysophosphatidic acid (LPA) into phosphatidic acid by incorporating acyl moiety at the 2 position. Has no activity when expressed in bacteria or yeast. In Arabidopsis thaliana (Mouse-ear cress), this protein is Probable 1-acyl-sn-glycerol-3-phosphate acyltransferase 5 (LPAT5).